The sequence spans 483 residues: Regulatory protein ViaA (483 aa).

This sequence belongs to the ViaA family. Homodimer. Interacts with RavA.

The protein resides in the cytoplasm. Component of the RavA-ViaA chaperone complex, which may act on the membrane to optimize the function of some of the respiratory chains. ViaA stimulates the ATPase activity of RavA. This chain is Regulatory protein ViaA, found in Cronobacter sakazakii (strain ATCC BAA-894) (Enterobacter sakazakii).